Here is a 257-residue protein sequence, read N- to C-terminus: Trans-aconitate 2-methyltransferase (257 aa).

The protein belongs to the methyltransferase superfamily. Tam family.

The protein localises to the cytoplasm. The catalysed reaction is trans-aconitate + S-adenosyl-L-methionine = (E)-3-(methoxycarbonyl)pent-2-enedioate + S-adenosyl-L-homocysteine. Functionally, catalyzes the S-adenosylmethionine monomethyl esterification of trans-aconitate. The protein is Trans-aconitate 2-methyltransferase of Sinorhizobium medicae (strain WSM419) (Ensifer medicae).